The sequence spans 356 residues: Putative ankyrin repeat protein R599 (356 aa).

6 ANK repeats span residues 111–143 (NDDILLCTAIINCSSECLLYLLDKGIPIDFCDN), 152–182 (RLEKYIYTTRKNKSSCDMLKIVIDRGGNVNT), 183–213 (HNYEPLYSAVNDNNFDKIKLLVENGANKLSD), 215–238 (KRKITNTNLEIFQYLIDNRVELEV), 239–266 (NFDDIFLQSIINDDSECMKLFIELGANI), and 267–298 (NSIPTLELTKIIINARHEILEILINYGLDINN).

The polypeptide is Putative ankyrin repeat protein R599 (Acanthamoeba polyphaga (Amoeba)).